A 446-amino-acid polypeptide reads, in one-letter code: Exodeoxyribonuclease 7 large subunit (446 aa).

This sequence belongs to the XseA family. As to quaternary structure, heterooligomer composed of large and small subunits.

It localises to the cytoplasm. It carries out the reaction Exonucleolytic cleavage in either 5'- to 3'- or 3'- to 5'-direction to yield nucleoside 5'-phosphates.. Functionally, bidirectionally degrades single-stranded DNA into large acid-insoluble oligonucleotides, which are then degraded further into small acid-soluble oligonucleotides. This chain is Exodeoxyribonuclease 7 large subunit, found in Streptococcus pneumoniae (strain ATCC BAA-255 / R6).